The primary structure comprises 535 residues: Cytochrome P450 4c3 (535 aa).

Glutamate 342 and cysteine 481 together coordinate heme.

The protein belongs to the cytochrome P450 family. It depends on heme as a cofactor.

Its subcellular location is the endoplasmic reticulum membrane. The protein resides in the microsome membrane. Functionally, may be involved in the metabolism of insect hormones and in the breakdown of synthetic insecticides. The sequence is that of Cytochrome P450 4c3 (Cyp4c3) from Drosophila melanogaster (Fruit fly).